The primary structure comprises 988 residues: Transposase for transposon Tn501 (988 aa).

The protein belongs to the transposase 7 family.

In terms of biological role, required for transposition of transposon Tn501. This chain is Transposase for transposon Tn501 (tnpA), found in Pseudomonas aeruginosa.